Reading from the N-terminus, the 142-residue chain is Nucleoside diphosphate kinase (142 aa).

ATP-binding residues include lysine 11, phenylalanine 59, arginine 87, threonine 93, arginine 104, and asparagine 114. Histidine 117 serves as the catalytic Pros-phosphohistidine intermediate.

It belongs to the NDK family. In terms of assembly, homotetramer. Mg(2+) serves as cofactor.

Its subcellular location is the cytoplasm. It carries out the reaction a 2'-deoxyribonucleoside 5'-diphosphate + ATP = a 2'-deoxyribonucleoside 5'-triphosphate + ADP. It catalyses the reaction a ribonucleoside 5'-diphosphate + ATP = a ribonucleoside 5'-triphosphate + ADP. Its function is as follows. Major role in the synthesis of nucleoside triphosphates other than ATP. The ATP gamma phosphate is transferred to the NDP beta phosphate via a ping-pong mechanism, using a phosphorylated active-site intermediate. In Hahella chejuensis (strain KCTC 2396), this protein is Nucleoside diphosphate kinase.